A 106-amino-acid polypeptide reads, in one-letter code: Replication restart protein PriB (106 aa).

The 100-residue stretch at 4–103 folds into the SSB domain; the sequence is TNRLVLSGTV…LHAEQIEFID (100 aa).

It belongs to the PriB family. As to quaternary structure, homodimer. Interacts with PriA and DnaT. Component of the replication restart primosome. Primosome assembly occurs via a 'hand-off' mechanism. PriA binds to replication forks, subsequently PriB then DnaT bind; DnaT then displaces ssDNA to generate the helicase loading substrate.

Its function is as follows. Involved in the restart of stalled replication forks, which reloads the replicative helicase on sites other than the origin of replication; the PriA-PriB pathway is the major replication restart pathway. During primosome assembly it facilitates complex formation between PriA and DnaT on DNA; stabilizes PriA on DNA. Stimulates the DNA unwinding activity of PriA helicase. This is Replication restart protein PriB from Yersinia enterocolitica serotype O:8 / biotype 1B (strain NCTC 13174 / 8081).